A 284-amino-acid polypeptide reads, in one-letter code: Proline-rich protein 32 (284 aa).

Disordered regions lie at residues 59-80 (RPPF…APRH), 97-119 (EINS…NMSQ), and 143-171 (SGNN…RGPP).

This chain is Proline-rich protein 32 (Prr32), found in Mus musculus (Mouse).